The sequence spans 473 residues: Cell division protein FtsZ homolog 2-2, chloroplastic (473 aa).

GTP contacts are provided by residues 124 to 128 (GGGSN), 213 to 215 (GTG), E244, and R248. T282 is subject to Phosphothreonine; by PGK1. D292 is a GTP binding site. Residues 424–455 (EEGEGRPLQATQADASMGATRRPSSSFTEGSS) are disordered. The segment covering 445–454 (RPSSSFTEGS) has biased composition (polar residues).

The protein belongs to the FtsZ family. As to quaternary structure, aggregates to form a contractile ring-like structure; contraction of the ring was accompanied by an increase in the filament turnover rate. Self-interacts and binds to FTSZ1 in heteropolymers to form two morphologically distinct types of filaments, termed type-I (smooth filaments) and -II (rough filaments), in a GTP-dependent manner. Part of a complex made of ARC3, ARC6, FTSZ1 and FTSZ2. Interacts (via C-terminus) with ARC6. Interacts with CDP1/PARC6. Binds to PGK1. Post-translationally, phosphorylation at Thr-282 is required for the formation of contractile ring at the chloroplast midpoint.

The protein resides in the plastid. The protein localises to the chloroplast stroma. Its subcellular location is the chloroplast thylakoid membrane. Exhibits GTPase activity. Component of the plastid division machinery that forms a contractile ring at the division site. Contributes to plastid division in the vegetative shoot apex, at the shoot apical meristem (SAM) where the proplastid-to-chloroplast transition takes place. In Arabidopsis thaliana (Mouse-ear cress), this protein is Cell division protein FtsZ homolog 2-2, chloroplastic.